The sequence spans 295 residues: G1/S-specific cyclin-D1 (295 aa).

A Cyclin N-terminal domain is found at 28–152 (LRAMLKTEET…LLVNKLKWNL (125 aa)). The segment at 262–283 (AQQNVDPKATEEEGEVEEEAGL) is disordered. Residue lysine 269 forms a Glycyl lysine isopeptide (Lys-Gly) (interchain with G-Cter in ubiquitin) linkage. Residue threonine 286 is modified to Phosphothreonine.

Belongs to the cyclin family. Cyclin D subfamily. Interacts with either CDK4 or CDK6 protein kinase to form a serine/threonine kinase holoenzyme complex. The cyclin subunit imparts substrate specificity to the complex. Component of the ternary complex CCND1/CDK4/CDKN1B required for nuclear translocation and modulation of CDK4-mediated kinase activity. Interacts directly with CDKN1B. Can form similar complexes with either CDKN1A or CDKN2A. Interacts with UHRF2; the interaction ubiquitinates CCND1 and appears to occur independently of phosphorylation. Interacts with USP2. Interacts (via cyclin N-terminal domain) with INSM1 (via N-terminal region); the interaction competes with the binding of CCND1 to CDK4 during cell cycle progression and inhibits CDK4 activity. Interacts with CDK4; the interaction is prevented with the binding of CCND1 to INSM1 during cell cycle progression. Phosphorylation at Thr-286 by MAP kinases is required for ubiquitination and degradation by the DCX(AMBRA1) complex. It also plays an essential role for recognition by the FBXO31 component of SCF (SKP1-cullin-F-box) protein ligase complex following DNA damage. In terms of processing, ubiquitinated at Lys-269 by the DCX(AMBRA1) complex during the transition from G1 to S cell phase, leading to its degradation: ubiquitination is dependent on Thr-286 phosphorylation. The DCX(AMBRA1) complex represents the major regulator of CCND1 stability during the G1/S transition. Also ubiquitinated by the SCF(FBXO4) and Cul7-RING(FBXW8) ubiquitin-protein ligase complexes. Following DNA damage it is ubiquitinated by the SCF(FBXO31) protein ligase complex. SCF(FBXO31) ubiquitination is dependent on Thr-286 phosphorylation. Ubiquitinated also by UHRF2 apparently in a phosphorylation-independent manner. Ubiquitination leads to its degradation and G1 arrest. Deubiquitinated by USP2; leading to its stabilization. As to expression, expressed in the intestinal epithelium.

The protein localises to the nucleus. The protein resides in the cytoplasm. Its subcellular location is the nucleus membrane. In terms of biological role, regulatory component of the cyclin D1-CDK4 (DC) complex that phosphorylates and inhibits members of the retinoblastoma (RB) protein family including RB1 and regulates the cell-cycle during G(1)/S transition. Phosphorylation of RB1 allows dissociation of the transcription factor E2F from the RB/E2F complex and the subsequent transcription of E2F target genes which are responsible for the progression through the G(1) phase. Hypophosphorylates RB1 in early G(1) phase. Cyclin D-CDK4 complexes are major integrators of various mitogenenic and antimitogenic signals. Also a substrate for SMAD3, phosphorylating SMAD3 in a cell-cycle-dependent manner and repressing its transcriptional activity. Component of the ternary complex, cyclin D1/CDK4/CDKN1B, required for nuclear translocation and activity of the cyclin D-CDK4 complex. Exhibits transcriptional corepressor activity with INSM1 on the NEUROD1 and INS promoters in a cell cycle-independent manner. This Mus musculus (Mouse) protein is G1/S-specific cyclin-D1 (Ccnd1).